We begin with the raw amino-acid sequence, 358 residues long: Arginine kinase (358 aa).

The Phosphagen kinase N-terminal domain maps to 6–88; the sequence is SVEELWAKLD…LDAVIKEYHK (83 aa). 61–65 serves as a coordination point for substrate; it reads GVGIY. The 238-residue stretch at 116–353 folds into the Phosphagen kinase C-terminal domain; that stretch reads YIVSTRVRVG…EACLAKEKEL (238 aa). ATP is bound by residues 119–123 and His182; that span reads STRVR. Glu222 provides a ligand contact to substrate. ATP is bound at residue Arg226. Cys269 provides a ligand contact to substrate. Residues 278-282 and 306-311 contribute to the ATP site; these read RASVH and RGIHGE. Glu311 is a binding site for substrate.

The protein belongs to the ATP:guanido phosphotransferase family. In terms of assembly, monomer.

The catalysed reaction is L-arginine + ATP = N(omega)-phospho-L-arginine + ADP + H(+). The chain is Arginine kinase from Haliotis madaka (Giant abalone).